Reading from the N-terminus, the 310-residue chain is Uridine phosphorylase 1 (310 aa).

Residues G60, R94, and 138-141 (RIGT) each bind phosphate. Uridine-binding positions include 142-143 (SG) and 217-219 (QGR).

Belongs to the PNP/UDP phosphorylase family. In terms of assembly, homodimer.

The enzyme catalyses uridine + phosphate = alpha-D-ribose 1-phosphate + uracil. It carries out the reaction 2'-deoxyuridine + phosphate = 2-deoxy-alpha-D-ribose 1-phosphate + uracil. The protein operates within pyrimidine metabolism; UMP biosynthesis via salvage pathway; uracil from uridine (phosphorylase route): step 1/1. Catalyzes the reversible phosphorylytic cleavage of uridine to uracil and ribose-1-phosphate which can then be utilized as carbon and energy sources or in the rescue of pyrimidine bases for nucleotide synthesis. Shows broad substrate specificity and can also accept deoxyuridine and other analogous compounds. In Homo sapiens (Human), this protein is Uridine phosphorylase 1.